A 625-amino-acid chain; its full sequence is Glutamine--fructose-6-phosphate aminotransferase [isomerizing] (625 aa).

Residue Cys-2 is the Nucleophile; for GATase activity of the active site. The Glutamine amidotransferase type-2 domain occupies 2-229 (CGIVGFVGRT…NDQIVTITAD (228 aa)). SIS domains lie at 296–436 (IDES…LRGN) and 470–615 (LAQD…VDQP). Lys-620 (for Fru-6P isomerization activity) is an active-site residue.

In terms of assembly, homodimer.

The protein localises to the cytoplasm. It carries out the reaction D-fructose 6-phosphate + L-glutamine = D-glucosamine 6-phosphate + L-glutamate. Functionally, catalyzes the first step in hexosamine metabolism, converting fructose-6P into glucosamine-6P using glutamine as a nitrogen source. The sequence is that of Glutamine--fructose-6-phosphate aminotransferase [isomerizing] from Corynebacterium diphtheriae (strain ATCC 700971 / NCTC 13129 / Biotype gravis).